The following is a 268-amino-acid chain: Short chain dehydrogenase/reductase dpchG (268 aa).

NADP(+) is bound by residues valine 18, aspartate 70, asparagine 97, lysine 131, tyrosine 165, and lysine 169. Tyrosine 165 serves as the catalytic Proton acceptor. Lysine 169 serves as the catalytic Lowers pKa of active site Tyr.

Belongs to the short-chain dehydrogenases/reductases (SDR) family.

Its pathway is secondary metabolite biosynthesis; terpenoid biosynthesis. Short chain dehydrogenase/reductase; part of the gene cluster that mediates the biosynthesis of the diterpenoid pyrones higginsianins A and B. The first step of the pathway is the synthesis of the alpha-pyrone moiety by the polyketide synthase dpchA via condensation of one acetyl-CoA starter unit with 3 malonyl-CoA units and 2 methylations. The alpha-pyrone is then combined with geranylgeranyl pyrophosphate (GGPP) formed by the GGPP synthase dpchD through the action of the prenyltransferase dpchC to yield a linear alpha-pyrone diterpenoid. Subsequent steps in the diterpenoid pyrone biosynthetic pathway involve the decalin core formation, which is initiated by the epoxidation of the C10-C11 olefin by the FAD-dependent oxidoreductase dpchE, and is followed by a cyclization cascade catalyzed by the terpene cyclase dpchB. The short chain dehydrogenase/reductase dpchG then oxidizes the 8S hydroxy group to a ketone and the short chain dehydrogenase/reductase dpchH reduces the ketone to the 8R hydroxy group to yield higginsianin B. Finally, the FAD-dependent oxidoreductase dpchF converts higginsianin B into higginsianin A. The protein is Short chain dehydrogenase/reductase dpchG of Colletotrichum higginsianum (strain IMI 349063) (Crucifer anthracnose fungus).